Reading from the N-terminus, the 215-residue chain is Probable phosphoglycerate mutase GpmB (215 aa).

Substrate contacts are provided by residues 8–15, 21–22, arginine 58, arginine 60, 82–85, 104–105, and 151–152; these read RHGETQWN, QG, ELDM, RR, and GI. Histidine 9 acts as the Tele-phosphohistidine intermediate in catalysis. Catalysis depends on glutamate 82, which acts as the Proton donor/acceptor.

The protein belongs to the phosphoglycerate mutase family. GpmB subfamily.

It catalyses the reaction (2R)-2-phosphoglycerate = (2R)-3-phosphoglycerate. The protein operates within carbohydrate degradation; glycolysis; pyruvate from D-glyceraldehyde 3-phosphate: step 3/5. This is Probable phosphoglycerate mutase GpmB from Citrobacter koseri (strain ATCC BAA-895 / CDC 4225-83 / SGSC4696).